We begin with the raw amino-acid sequence, 26 residues long: ALWKDMLSGIGKLAGQAALGAVKTLV.

The residue at position 26 (V26) is a Valine amide.

Expressed by the skin glands.

The protein resides in the secreted. Has antimicrobial activity. This Phasmahyla jandaia (Jandaia leaf frog) protein is Dermaseptin-J4.